The sequence spans 427 residues: Probable transcription factor At5g28040 (427 aa).

The segment at 1-81 (MASDQRDTDF…APATKSSSGT (81 aa)) is disordered. The residue at position 14 (serine 14) is a Phosphoserine. Gly residues predominate over residues 22-32 (GGGGGGRGGGE). The segment covering 33–62 (TESDEDVVIPEPNEAEDDDHDPDPDPEYED) has biased composition (acidic residues).

The protein belongs to the GeBP family.

The polypeptide is Probable transcription factor At5g28040 (Arabidopsis thaliana (Mouse-ear cress)).